The primary structure comprises 75 residues: UPF0352 protein VV1166 (75 aa).

Belongs to the UPF0352 family.

The polypeptide is UPF0352 protein VV1166 (Vibrio vulnificus (strain YJ016)).